A 595-amino-acid chain; its full sequence is Aspartate--tRNA(Asp/Asn) ligase (595 aa).

Glu177 is an L-aspartate binding site. The aspartate stretch occupies residues 201–204 (QQFK). Arg223 lines the L-aspartate pocket. ATP contacts are provided by residues 223-225 (RDE) and Gln232. Position 455 (His455) interacts with L-aspartate. Glu489 contributes to the ATP binding site. Residue Arg496 participates in L-aspartate binding. Residue 542-545 (GLDR) coordinates ATP.

The protein belongs to the class-II aminoacyl-tRNA synthetase family. Type 1 subfamily. Homodimer.

The protein resides in the cytoplasm. It catalyses the reaction tRNA(Asx) + L-aspartate + ATP = L-aspartyl-tRNA(Asx) + AMP + diphosphate. In terms of biological role, aspartyl-tRNA synthetase with relaxed tRNA specificity since it is able to aspartylate not only its cognate tRNA(Asp) but also tRNA(Asn). Reaction proceeds in two steps: L-aspartate is first activated by ATP to form Asp-AMP and then transferred to the acceptor end of tRNA(Asp/Asn). The chain is Aspartate--tRNA(Asp/Asn) ligase from Opitutus terrae (strain DSM 11246 / JCM 15787 / PB90-1).